Reading from the N-terminus, the 390-residue chain is Ketoisovalerate reductase BEA2 (390 aa).

An NADP(+)-binding site is contributed by 70 to 75 (GPGNIG). Lys285 (proton donor) is an active-site residue. 2 residues coordinate substrate: Asn289 and Asn293.

It belongs to the ketopantoate reductase family.

It catalyses the reaction (R)-2-hydroxy-3-methylbutanoate + NADP(+) = 3-methyl-2-oxobutanoate + NADPH + H(+). With respect to regulation, the reductase activity is increased by Mg(2+) (195%), Ca(2+) (169%) and slightly increased by K(+) (123%). The reduction activity is inhibited by Fe(2+) and Co(2+), and almost totally inhibited by Cu(2+), Mn(2+), Zn(2+) and Fe(3+) (from 3% to 9% residual activity respectively). The chelating agent EDTA had little effect, suggesting Mg(2+) and Ca(2+) are not determining factors, though they could promote the reductase enzyme activity. Its function is as follows. Ketoisovalerate reductase; part of the gene cluster that mediates the biosynthesis of beauvericin (BEA), a non-ribosomal cyclic hexadepsipeptide that shows antibiotic, antifungal, insecticidal, and cancer cell antiproliferative and antihaptotactic activity. Ketoisovalerate reductase BEA2 catalyzes the NADPH-specific reduction of ketoisovaleric acid to hydroxyisovalerate, a precursor for beauvericin biosynthesis. The nonribosomal cyclodepsipeptide synthetase BEA1 then catalyzes the formation of beauvericin via condensation and cyclization of 3 dipeptidol monomers, each composed of one unit of hydroxyisovalerate and one unit of N-methyl-phenylalanine. In Gibberella intermedia (Bulb rot disease fungus), this protein is Ketoisovalerate reductase BEA2.